A 137-amino-acid polypeptide reads, in one-letter code: Neutral phospholipase A2 ammodytin I2 (137 aa).

The first 16 residues, 1–16, serve as a signal peptide directing secretion; it reads MRTLWIVAVCLIGVEG. 7 disulfide bridges follow: Cys-42–Cys-131, Cys-44–Cys-60, Cys-59–Cys-111, Cys-65–Cys-137, Cys-66–Cys-104, Cys-73–Cys-97, and Cys-91–Cys-102. Positions 43, 45, and 47 each coordinate Ca(2+). His-63 is a catalytic residue. Asp-64 serves as a coordination point for Ca(2+). Asp-105 is an active-site residue.

Belongs to the phospholipase A2 family. Group II subfamily. D49 sub-subfamily. Ca(2+) is required as a cofactor. In terms of tissue distribution, expressed by the venom gland.

Its subcellular location is the secreted. The enzyme catalyses a 1,2-diacyl-sn-glycero-3-phosphocholine + H2O = a 1-acyl-sn-glycero-3-phosphocholine + a fatty acid + H(+). Snake venom phospholipase A2 (PLA2) that has enzymatic activity but is non-toxic. Displays low binding affinity and enzymatic activity on phosphatidylserine-containing vesicles and HEK-293 plasma membranes, in contrast to ammodytoxins that have high activity on these phospholipids. PLA2 catalyzes the calcium-dependent hydrolysis of the 2-acyl groups in 3-sn-phosphoglycerides. The protein is Neutral phospholipase A2 ammodytin I2 of Vipera ammodytes ammodytes (Western sand viper).